A 753-amino-acid chain; its full sequence is Ribosome biogenesis protein BOP1 homolog (753 aa).

Residues 1–155 (MTKRSKGANE…RNTVGNVPLK (155 aa)) are disordered. Composition is skewed to basic and acidic residues over residues 7–18 (GANEDKLIETKS) and 30–41 (KPVEAESLKEED). 2 stretches are compositionally biased toward acidic residues: residues 64-75 (DDFDSDFSDSED) and 83-109 (EDGD…DDDG). The segment covering 110–121 (SEHVGSDNNEEH) has biased composition (basic and acidic residues). Positions 122–142 (GSDEDSERGEAVEESDSSEDE) are enriched in acidic residues. 6 WD repeats span residues 421 to 462 (GHTG…KVWQ), 464 to 502 (DEAI…DEEQ), 539 to 581 (RHFK…TQRL), 626 to 665 (TGLR…KPYK), 669 to 708 (NHPK…DLNQ), and 722 to 753 (SSKG…LYCH).

This sequence belongs to the WD repeat BOP1/ERB1 family. In terms of assembly, interacts with PES. Interacts with WDR12.

It is found in the nucleus. The protein resides in the nucleolus. Its subcellular location is the nucleoplasm. Required for maturation of ribosomal RNAs and formation of the large ribosomal subunit. Plays an essential role in cell growth and survival through its regulation of ribosome biogenesis and mitotic progression. This is Ribosome biogenesis protein BOP1 homolog from Arabidopsis thaliana (Mouse-ear cress).